The primary structure comprises 131 residues: Ribosome-binding factor A (131 aa).

It belongs to the RbfA family. Monomer. Binds 30S ribosomal subunits, but not 50S ribosomal subunits or 70S ribosomes.

The protein resides in the cytoplasm. In terms of biological role, one of several proteins that assist in the late maturation steps of the functional core of the 30S ribosomal subunit. Associates with free 30S ribosomal subunits (but not with 30S subunits that are part of 70S ribosomes or polysomes). Required for efficient processing of 16S rRNA. May interact with the 5'-terminal helix region of 16S rRNA. The sequence is that of Ribosome-binding factor A from Mannheimia succiniciproducens (strain KCTC 0769BP / MBEL55E).